The chain runs to 423 residues: MQTQILERMESEVRTYSRSFPTVFTEAKGARLHAEDGNQYIDFLAGAGTLNYGHNHPKLKQALADYIASDGIVHGLDMWSAAKRDYLETLEEVILKPRGLDYKVHLPGPTGTNAVEAAIRLARNAKGRHNIVTFTNGFHGVTMGALATTGNRKFREATGGIPTQGASFMPFDGYMGEGVDTLSYFEKLLGDNSGGLDVPAAVIIETVQGEGGINPAGIPWLQRLEKICRDHDMLLIVDDIQAGCGRTGKFFSFEHAGITPDIVTNSKSLSGFGLPFAHVLMRPELDIWKPGQYNGTFRGFNLAFVTAAAAMRHFWSDDTFERDVQRKGRVVEDRFQKLASFMTEKGHPASERGRGLMRGLDVGDGDMADKITAQAFKNGLIIETSGHSGQVIKCLCPLTITDEDLVGGLDILEQSVKEVFGQA.

An N6-(pyridoxal phosphate)lysine modification is found at Lys-267.

This sequence belongs to the class-III pyridoxal-phosphate-dependent aminotransferase family. Homohexamer. Requires pyridoxal 5'-phosphate as cofactor.

It carries out the reaction L-2,4-diaminobutanoate + 2-oxoglutarate = L-aspartate 4-semialdehyde + L-glutamate. Its pathway is amine and polyamine biosynthesis; ectoine biosynthesis; L-ectoine from L-aspartate 4-semialdehyde: step 1/3. Catalyzes reversively the conversion of L-aspartate beta-semialdehyde (ASA) to L-2,4-diaminobutyrate (DABA) by transamination with L-glutamate. This chain is Diaminobutyrate--2-oxoglutarate transaminase (ectB), found in Chromohalobacter salexigens (strain ATCC BAA-138 / DSM 3043 / CIP 106854 / NCIMB 13768 / 1H11).